The following is a 201-amino-acid chain: Recombination protein RecR (201 aa).

The segment at 57-72 (CSDCRTFTEQDVCAIC) adopts a C4-type zinc-finger fold. The 96-residue stretch at 81 to 176 (GLVCVVESPA…MASRIAHGVP (96 aa)) folds into the Toprim domain.

This sequence belongs to the RecR family.

Functionally, may play a role in DNA repair. It seems to be involved in an RecBC-independent recombinational process of DNA repair. It may act with RecF and RecO. This is Recombination protein RecR from Pectobacterium atrosepticum (strain SCRI 1043 / ATCC BAA-672) (Erwinia carotovora subsp. atroseptica).